The sequence spans 373 residues: NAD(P)H-quinone oxidoreductase subunit 1 (373 aa).

Helical transmembrane passes span L29–M49, I64–L84, V98–V118, I129–M149, L177–V197, G202–I222, L267–V287, V309–L329, and F348–P368.

It belongs to the complex I subunit 1 family. In terms of assembly, NDH-1 is composed of at least 11 different subunits.

The protein resides in the cellular thylakoid membrane. The enzyme catalyses a plastoquinone + NADH + (n+1) H(+)(in) = a plastoquinol + NAD(+) + n H(+)(out). The catalysed reaction is a plastoquinone + NADPH + (n+1) H(+)(in) = a plastoquinol + NADP(+) + n H(+)(out). Its function is as follows. NDH-1 shuttles electrons from an unknown electron donor, via FMN and iron-sulfur (Fe-S) centers, to quinones in the respiratory and/or the photosynthetic chain. The immediate electron acceptor for the enzyme in this species is believed to be plastoquinone. Couples the redox reaction to proton translocation, and thus conserves the redox energy in a proton gradient. This Synechococcus sp. (strain JA-3-3Ab) (Cyanobacteria bacterium Yellowstone A-Prime) protein is NAD(P)H-quinone oxidoreductase subunit 1.